Consider the following 653-residue polypeptide: Potassium voltage-gated channel subfamily A member 4 (653 aa).

Residues 1 to 304 (MEVAMVSAES…LLFEYPESSS (304 aa)) lie on the Cytoplasmic side of the membrane. The tract at residues 24-148 (QARARERERL…RFYYSEDDHG (125 aa)) is disordered. A compositionally biased stretch (low complexity) spans 36–52 (SRAAAAAAVAAATAAVE). Positions 81–97 (GSRRRRRQRSEKKKAHY) are enriched in basic residues. Residue Ser90 is modified to Phosphoserine; by PKA. Phosphoserine is present on Ser122. The segment covering 122–137 (SEEEEDEEEEEEEEEE) has biased composition (acidic residues). The chain crosses the membrane as a helical span at residues 305–326 (PARGIAIVSVLVILISIVIFCL). Over 327–370 (ETLPEFRDDRDLVMALSAGGHGGLLNDTSAPHLENSGHTIFNDP) the chain is Extracellular. N-linked (GlcNAc...) asparagine glycosylation is present at Asn352. The chain crosses the membrane as a helical span at residues 371 to 392 (FFIVETVCIVWFSFEFVVRCFA). Residues 393–403 (CPSQALFFKNI) lie on the Cytoplasmic side of the membrane. A helical transmembrane segment spans residues 404-424 (MNIIDIVSILPYFITLGTDLA). The Extracellular portion of the chain corresponds to 425 to 439 (QQQGGGNGQQQQAMS). The helical; Voltage-sensor transmembrane segment at 440–460 (FAILRIIRLVRVFRIFKLSRH) threads the bilayer. At 461–475 (SKGLQILGHTLRASM) the chain is on the cytoplasmic side. Positions 462–475 (KGLQILGHTLRASM) are S4-S5 linker. Residues 476–497 (RELGLLIFFLFIGVILFSSAVY) form a helical membrane-spanning segment. Residues 498–511 (FAEADEPTTHFQSI) are Extracellular-facing. The helical intramembrane region spans 512–523 (PDAFWWAVVTMT). The short motif at 524–529 (TVGYGD) is the Selectivity filter element. Residues 524-531 (TVGYGDMK) lie within the membrane without spanning it. The Extracellular portion of the chain corresponds to 532 to 538 (PITVGGK). The helical transmembrane segment at 539–567 (IVGSLCAIAGVLTIALPVPVIVSNFNYFY) threads the bilayer. Residues 568–653 (HRETENEEQT…SNAKAVETDV (86 aa)) lie on the Cytoplasmic side of the membrane. Position 599 is a phosphoserine; by PKA (Ser599). Positions 629–640 (CQGKGDDSETDK) are enriched in basic and acidic residues. Residues 629-653 (CQGKGDDSETDKNNCSNAKAVETDV) form a disordered region. The PDZ-binding motif lies at 651–653 (TDV).

This sequence belongs to the potassium channel family. A (Shaker) (TC 1.A.1.2) subfamily. Kv1.4/KCNA4 sub-subfamily. As to quaternary structure, homotetramer and heterotetramer of potassium channel proteins. Interacts with KCNAB1 and KCNAB2. Interacts with DLG1, DLG2 and DLG4 via their PDZ domains. Interacts with SIGMAR1. Detected in a complex with KCNA1. Interacts with KCNA2. Part of a complex containing KCNA1, KCNAB1 and LGI1. Interacts (via cytoplasmic N-terminal domain) with KCNRG. As to expression, expressed in brain, and at lower levels in the testis, lung, kidney, colon and heart. Detected in heart ventricle.

The protein resides in the cell membrane. It localises to the cell projection. It is found in the axon. It catalyses the reaction K(+)(in) = K(+)(out). With respect to regulation, inhibited by 4-aminopyridine (4-AP), but not by tetraethylammonium (TEA) and charybdotoxin (CTX). In terms of biological role, voltage-gated potassium channel that mediates transmembrane potassium transport in excitable membranes. Forms tetrameric potassium-selective channels through which potassium ions pass in accordance with their electrochemical gradient. The channel alternates between opened and closed conformations in response to the voltage difference across the membrane. Can form functional homotetrameric channels and heterotetrameric channels that contain variable proportions of KCNA1, KCNA2, KCNA4, KCNA5, and possibly other family members as well; channel properties depend on the type of alpha subunits that are part of the channel. Channel properties are modulated by cytoplasmic beta subunits that regulate the subcellular location of the alpha subunits and promote rapid inactivation. In vivo, membranes probably contain a mixture of heteromeric potassium channel complexes, making it difficult to assign currents observed in intact tissues to any particular potassium channel family member. Homotetrameric KCNA4 forms a potassium channel that opens in response to membrane depolarization, followed by rapid spontaneous channel closure. Likewise, a heterotetrameric channel formed by KCNA1 and KCNA4 shows rapid inactivation. In Homo sapiens (Human), this protein is Potassium voltage-gated channel subfamily A member 4 (KCNA4).